The chain runs to 194 residues: UPF0301 protein FTM_0963 (194 aa).

Belongs to the UPF0301 (AlgH) family.

In Francisella tularensis subsp. mediasiatica (strain FSC147), this protein is UPF0301 protein FTM_0963.